The primary structure comprises 1480 residues: Nonribosomal peptide synthetase-like enzyme fsqF (1480 aa).

The interval 31–59 is disordered; that stretch reads SPFADEPSIDVPSTHLPVVTPRSKTANDR. The tract at residues 132 to 527 is adenylation domain; the sequence is DSARATPHAP…VGRTDDQVKY (396 aa). The Carrier domain occupies 662–741; that stretch reads STARTIAREY…SIASLIDANS (80 aa). At serine 700 the chain carries O-(pantetheine 4'-phosphoryl)serine. Positions 739–754 are enriched in polar residues; that stretch reads ANSSPGRGQPLNTQET. Residues 739 to 773 form a disordered region; sequence ANSSPGRGQPLNTQETARLPLRSNGPAPSQQALER. The segment at 780–1003 is NAD-binding domain; the sequence is LTGASGFLGI…ACVELGFYNG (224 aa). The interval 1100–1465 is aminotransferase domain; that stretch reads NAAGTVVHRE…YNTVAEVQEF (366 aa).

Belongs to the NRP synthetase family.

The protein operates within secondary metabolite biosynthesis. In terms of biological role, nonribosomal peptide synthetase-like enzyme; part of the gene cluster that mediates the biosynthesis of the isoquinoline alkaloids fumisoquin A, fumisoquin B and fumisoquin C; as well as small amounts of fumipyrrole as a shunt metabolite. The products of the cluster lead to a brown coloration and are important for growth and conidiation. The nonribosomal peptide synthetase-like protein fsqF, which lacks a canonical condensation domain, is required for addition of a serine-derived dehydroalanine moiety to activated tyrosine but is not essential for the subsequent steps leading to isoquinoline formation. A different enzyme, most likely the ATP-grasp enzyme fsqD, is responsible for activation of tyrosine. Three additional enzymes encoded by the fsq cluster, the N-methyltransferase fsqC, the phenol 2-monooxygenase fsqG and the FAD-dependent oxidase fsqB, catalyze the formation of the isoquinoline ring system in the fumisoquins. FsqB converts the fspF thiolation domain-bound (2S,4S,5S)-2-amino-6-(3,4-dihydroxyphenyl)-4-hydroxy-5-(methylamino)hexanoyl into isoquinoline. The cyclization most likely proceeds via a two-step mechanism, beginning with FAD-dependent oxidation of the methyl group to an iminium species followed by electrophilic attack on the deprotonated phenol. This chain is Nonribosomal peptide synthetase-like enzyme fsqF, found in Aspergillus fumigatus (strain ATCC MYA-4609 / CBS 101355 / FGSC A1100 / Af293) (Neosartorya fumigata).